Consider the following 499-residue polypeptide: Glutamate--tRNA ligase (499 aa).

The 'HIGH' region motif lies at 10–20 (PSPTGTPHVGM). The 'KMSKS' region motif lies at 255-259 (KLSKR). ATP is bound at residue K258.

Belongs to the class-I aminoacyl-tRNA synthetase family. Glutamate--tRNA ligase type 1 subfamily. Monomer.

It is found in the cytoplasm. The enzyme catalyses tRNA(Glu) + L-glutamate + ATP = L-glutamyl-tRNA(Glu) + AMP + diphosphate. Catalyzes the attachment of glutamate to tRNA(Glu) in a two-step reaction: glutamate is first activated by ATP to form Glu-AMP and then transferred to the acceptor end of tRNA(Glu). The sequence is that of Glutamate--tRNA ligase from Corynebacterium urealyticum (strain ATCC 43042 / DSM 7109).